Consider the following 565-residue polypeptide: Sulfite reductase [NADPH] hemoprotein beta-component (565 aa).

The [4Fe-4S] cluster site is built by cysteine 429, cysteine 435, cysteine 474, and cysteine 478. Cysteine 478 is a siroheme binding site.

The protein belongs to the nitrite and sulfite reductase 4Fe-4S domain family. As to quaternary structure, alpha(8)-beta(8). The alpha component is a flavoprotein, the beta component is a hemoprotein. It depends on siroheme as a cofactor. [4Fe-4S] cluster is required as a cofactor.

The enzyme catalyses hydrogen sulfide + 3 NADP(+) + 3 H2O = sulfite + 3 NADPH + 4 H(+). Its pathway is sulfur metabolism; hydrogen sulfide biosynthesis; hydrogen sulfide from sulfite (NADPH route): step 1/1. Component of the sulfite reductase complex that catalyzes the 6-electron reduction of sulfite to sulfide. This is one of several activities required for the biosynthesis of L-cysteine from sulfate. This chain is Sulfite reductase [NADPH] hemoprotein beta-component, found in Shewanella loihica (strain ATCC BAA-1088 / PV-4).